We begin with the raw amino-acid sequence, 85 residues long: Protein RnfH (85 aa).

It belongs to the UPF0125 (RnfH) family.

The polypeptide is Protein RnfH (Cereibacter sphaeroides (strain ATCC 17029 / ATH 2.4.9) (Rhodobacter sphaeroides)).